The chain runs to 183 residues: Protein Syd (183 aa).

Belongs to the Syd family.

The protein localises to the cell inner membrane. Interacts with the SecY protein in vivo. May bind preferentially to an uncomplexed state of SecY, thus functioning either as a chelating agent for excess SecY in the cell or as a regulatory factor that negatively controls the translocase function. In Yersinia enterocolitica serotype O:8 / biotype 1B (strain NCTC 13174 / 8081), this protein is Protein Syd.